A 144-amino-acid chain; its full sequence is Large ribosomal subunit protein uL15 (144 aa).

Residues 1–45 (MNLNTLSPDPGSRPSRRRVGRGIGSGLGKTCGKGHKGQKSRAGGY) form a disordered region. Residues 21–31 (RGIGSGLGKTC) are compositionally biased toward gly residues.

Belongs to the universal ribosomal protein uL15 family. In terms of assembly, part of the 50S ribosomal subunit.

Functionally, binds to the 23S rRNA. The chain is Large ribosomal subunit protein uL15 from Legionella pneumophila (strain Corby).